The chain runs to 348 residues: Rhodopsin (348 aa).

The residue at position 1 (Met1) is an N-acetylmethionine. The Extracellular segment spans residues 1-36; the sequence is MNGTEGPNFYVPFSNKTGVVRSPFEEPQYYLAEPWQ. Residues Asn2 and Asn15 are each glycosylated (N-linked (GlcNAc...) asparagine). The chain crosses the membrane as a helical span at residues 37-61; sequence FSCLAAYMFMLIVLGFPINFLTLYV. The Cytoplasmic segment spans residues 62–73; that stretch reads TIQHKKLRTPLN. The chain crosses the membrane as a helical span at residues 74-96; the sequence is YILLNLAIADLFMVFGGFTTTLY. Residues 97–110 are Extracellular-facing; sequence TSLHGYFVFGPTGC. Cys110 and Cys187 are oxidised to a cystine. The helical transmembrane segment at 111–133 threads the bilayer; that stretch reads DLEGFFATLGGEIALWSLVVLAI. Positions 134-136 match the 'Ionic lock' involved in activated form stabilization motif; that stretch reads ERY. Over 134–152 the chain is Cytoplasmic; that stretch reads ERYIVVCKPMSNFRFGENH. Residues 153 to 173 form a helical membrane-spanning segment; sequence AIMGVAFTWVMALACAAPPLV. Topologically, residues 174-202 are extracellular; it reads GWSRYIPEGMQCSCGIDYYTLKPEVNNES. Residue Glu201 coordinates Zn(2+). Residues 203-224 form a helical membrane-spanning segment; it reads FVIYMFVVHFTIPMVVIFFCYG. Over 225–252 the chain is Cytoplasmic; the sequence is QLVFTVKEAAAQQQESATTQKAEKEVTR. Residues 253–274 traverse the membrane as a helical segment; it reads MVIIMVIAFLICWLPYAGVAFY. Topologically, residues 275-286 are extracellular; that stretch reads IFTHQGSNFGPI. Gln279 contacts Zn(2+). The chain crosses the membrane as a helical span at residues 287–308; that stretch reads LMTLPAFFAKTSAVYNPVIYIM. Lys296 carries the post-translational modification N6-(retinylidene)lysine. Residues 309 to 348 lie on the Cytoplasmic side of the membrane; the sequence is LNKQFRTCMLTTLCCGKIPLGDDEASATASKTETSQVAPA. S-palmitoyl cysteine attachment occurs at residues Cys322 and Cys323. An interaction with SAG region spans residues 330 to 348; the sequence is DDEASATASKTETSQVAPA. Ser334 is subject to Phosphoserine. Thr336 is modified (phosphothreonine). Ser338 bears the Phosphoserine mark. A phosphothreonine mark is found at Thr340 and Thr342. At Ser343 the chain carries Phosphoserine.

This sequence belongs to the G-protein coupled receptor 1 family. Opsin subfamily. Homodimer. May form a complex composed of RHO, GRK1 and RCVRN in a Ca(2+)-dependent manner; RCVRN prevents the interaction between GRK1 and RHO. Interacts with GRK1. Interacts (phosphorylated form) with SAG. Interacts with GNAT1. Interacts with GNAT3. SAG and G-proteins compete for a common binding site. Interacts with PRCD; the interaction promotes PRCD stability. Forms a complex with ASAP1 and ARF4. Forms a complex with ASAP1, RAB11A, Rabin8/RAB3IP, ARF4 and RAB11FIP3; the complex regulates Golgi-to-cilia rhodopsin/RHO transport in photoreceptors. In terms of processing, phosphorylated on some or all of the serine and threonine residues present in the C-terminal region. Contains one covalently linked retinal chromophore. Upon light absorption, the covalently bound 11-cis-retinal is converted to all-trans-retinal. After hydrolysis of the Schiff base and release of the covalently bound all-trans-retinal, active rhodopsin is regenerated by binding of a fresh molecule of 11-cis-retinal.

It is found in the membrane. The protein resides in the cell projection. The protein localises to the cilium. Its subcellular location is the photoreceptor outer segment. Its function is as follows. Photoreceptor required for image-forming vision at low light intensity. Required for photoreceptor cell viability after birth. Light-induced isomerization of 11-cis to all-trans retinal triggers a conformational change that activates signaling via G-proteins. Subsequent receptor phosphorylation mediates displacement of the bound G-protein alpha subunit by the arrestin SAG and terminates signaling. This is Rhodopsin (RHO) from Caluromys philander (Bare-tailed woolly opossum).